A 1186-amino-acid chain; its full sequence is ATP-dependent helicase/deoxyribonuclease subunit B (1186 aa).

Residues 1 to 308 enclose the UvrD-like helicase ATP-binding domain; sequence MSVKFLLGRA…AHLEKEWGKN (308 aa). Residue 8–15 coordinates ATP; that stretch reads GRAGSGKT. The region spanning 288-620 is the UvrD-like helicase C-terminal domain; sequence SLPRFKDNPA…LVGTADRSRY (333 aa). [4Fe-4S] cluster is bound by residues Cys822, Cys1144, Cys1147, and Cys1153.

This sequence belongs to the helicase family. AddB/RexB type 1 subfamily. As to quaternary structure, heterodimer of AddA and AddB. The cofactor is Mg(2+). Requires [4Fe-4S] cluster as cofactor.

The heterodimer acts as both an ATP-dependent DNA helicase and an ATP-dependent, dual-direction single-stranded exonuclease. Recognizes the chi site generating a DNA molecule suitable for the initiation of homologous recombination. The AddB subunit has 5' -&gt; 3' nuclease activity but not helicase activity. The sequence is that of ATP-dependent helicase/deoxyribonuclease subunit B from Natranaerobius thermophilus (strain ATCC BAA-1301 / DSM 18059 / JW/NM-WN-LF).